A 648-amino-acid chain; its full sequence is Indolepyruvate oxidoreductase subunit IorA (648 aa).

2 consecutive 4Fe-4S ferredoxin-type domains span residues 585 to 614 and 616 to 645; these read PIYQ…WDAE and KKAR…KVRE. Residues Cys-594, Cys-597, Cys-600, Cys-606, Cys-625, Cys-628, Cys-631, and Cys-635 each contribute to the [4Fe-4S] cluster site.

Heterodimer of the IorA and IorB subunits. [4Fe-4S] cluster is required as a cofactor.

The catalysed reaction is indole-3-pyruvate + 2 oxidized [2Fe-2S]-[ferredoxin] + CoA = (indol-3-yl)acetyl-CoA + 2 reduced [2Fe-2S]-[ferredoxin] + CO2 + H(+). In terms of biological role, catalyzes the ferredoxin-dependent oxidative decarboxylation of arylpyruvates. This is Indolepyruvate oxidoreductase subunit IorA (iorA) from Pyrococcus horikoshii (strain ATCC 700860 / DSM 12428 / JCM 9974 / NBRC 100139 / OT-3).